We begin with the raw amino-acid sequence, 248 residues long: DnaA regulatory inactivator Hda (248 aa).

This sequence belongs to the DnaA family. HdA subfamily. In terms of assembly, the active form seems to be an ADP-bound monomer. Forms the RIDA complex (regulatory inactivation of DnaA) of ATP-DnaA, ADP-Hda and the DNA-loaded beta sliding clamp (dnaN).

Its function is as follows. Mediates the interaction of DNA replication initiator protein DnaA with DNA polymerase subunit beta sliding clamp (dnaN). Stimulates hydrolysis of ATP-DnaA to ADP-DnaA, rendering DnaA inactive for reinitiation, a process called regulatory inhibition of DnaA or RIDA. This Proteus mirabilis (strain HI4320) protein is DnaA regulatory inactivator Hda.